Reading from the N-terminus, the 202-residue chain is FMN-dependent NADH:quinone oxidoreductase 2 (202 aa).

Residues S9, S15 to S17, M95 to F98, and T139 to G142 each bind FMN.

The protein belongs to the azoreductase type 1 family. Homodimer. The cofactor is FMN.

It catalyses the reaction 2 a quinone + NADH + H(+) = 2 a 1,4-benzosemiquinone + NAD(+). It carries out the reaction N,N-dimethyl-1,4-phenylenediamine + anthranilate + 2 NAD(+) = 2-(4-dimethylaminophenyl)diazenylbenzoate + 2 NADH + 2 H(+). In terms of biological role, quinone reductase that provides resistance to thiol-specific stress caused by electrophilic quinones. Reduces both benzoquinones and naphthoquinones efficiently. Also exhibits azoreductase activity. Catalyzes the reductive cleavage of the azo bond in aromatic azo compounds to the corresponding amines. Preferred substrates are the large bis-azo dye Ponceau BS, amaranth and tropaeolin O. This is FMN-dependent NADH:quinone oxidoreductase 2 from Pseudomonas aeruginosa (strain ATCC 15692 / DSM 22644 / CIP 104116 / JCM 14847 / LMG 12228 / 1C / PRS 101 / PAO1).